The sequence spans 133 residues: Small ribosomal subunit protein uS8 (133 aa).

The protein belongs to the universal ribosomal protein uS8 family. Part of the 30S ribosomal subunit. Contacts proteins S5 and S12.

Its function is as follows. One of the primary rRNA binding proteins, it binds directly to 16S rRNA central domain where it helps coordinate assembly of the platform of the 30S subunit. This is Small ribosomal subunit protein uS8 from Prochlorococcus marinus (strain MIT 9515).